A 481-amino-acid chain; its full sequence is Phosphoenolpyruvate phosphatase (481 aa).

Residues 1–36 (MPIYTSRSCFYLLLFHIILLCSVDKTLCRQTSSFVR) form the signal peptide. An N-linked (GlcNAc...) asparagine glycan is attached at asparagine 109. 3 residues coordinate Fe cation: aspartate 168, aspartate 195, and tyrosine 198. Aspartate 195 is a binding site for Zn(2+). Asparagine 206 is a glycosylation site (N-linked (GlcNAc...) asparagine). Zn(2+)-binding residues include asparagine 232 and histidine 317. Asparagine 232 is a binding site for substrate. Histidine 327 serves as the catalytic Proton donor. Residue histidine 354 participates in Zn(2+) binding. 354 to 356 (HVH) is a binding site for substrate. Histidine 356 lines the Fe cation pocket. 2 N-linked (GlcNAc...) asparagine glycosylation sites follow: asparagine 370 and asparagine 427.

It belongs to the metallophosphoesterase superfamily. Purple acid phosphatase family.

It is found in the vacuole lumen. The catalysed reaction is phosphoenolpyruvate + H2O = pyruvate + phosphate. Functionally, phosphoenolpyruvate phosphatase that probably operates in the vacuole to release phosphate from phosphoenolpyruvate (PEP) under phosphorus starvation. This chain is Phosphoenolpyruvate phosphatase (ACPEPP), found in Allium cepa (Onion).